Here is a 268-residue protein sequence, read N- to C-terminus: Ribosomal RNA small subunit methyltransferase A (268 aa).

S-adenosyl-L-methionine is bound by residues N16, L18, G43, E64, D89, and N110.

Belongs to the class I-like SAM-binding methyltransferase superfamily. rRNA adenine N(6)-methyltransferase family. RsmA subfamily.

The protein localises to the cytoplasm. The catalysed reaction is adenosine(1518)/adenosine(1519) in 16S rRNA + 4 S-adenosyl-L-methionine = N(6)-dimethyladenosine(1518)/N(6)-dimethyladenosine(1519) in 16S rRNA + 4 S-adenosyl-L-homocysteine + 4 H(+). Functionally, specifically dimethylates two adjacent adenosines (A1518 and A1519) in the loop of a conserved hairpin near the 3'-end of 16S rRNA in the 30S particle. May play a critical role in biogenesis of 30S subunits. The protein is Ribosomal RNA small subunit methyltransferase A of Pseudomonas syringae pv. tomato (strain ATCC BAA-871 / DC3000).